Here is a 315-residue protein sequence, read N- to C-terminus: 6-phosphogluconolactonase-like protein 2 (315 aa).

2 positions are modified to phosphoserine: S42 and S64. A disordered region spans residues 59 to 85 (CKSTASAAEGKSGSSGSGSGSSKPKKE). Positions 60–70 (KSTASAAEGKS) are enriched in low complexity.

The protein belongs to the glucosamine/galactosamine-6-phosphate isomerase family. 6-phosphogluconolactonase subfamily.

Its subcellular location is the cytoplasm. Functionally, may be involved in regulation of tRNA subcellular distribution. The polypeptide is 6-phosphogluconolactonase-like protein 2 (SOL2) (Saccharomyces cerevisiae (strain ATCC 204508 / S288c) (Baker's yeast)).